A 617-amino-acid polypeptide reads, in one-letter code: MIIRHLSENIINQIAAGEVIERPANVVKELVENAIDAGATRIEIITANGGKNFIKVSDNGCGIPADQLTLAVSRHCTSKITDDVHNICFLGFRGEALPSIGSVAKLKLISRTKEAENAAEISVTAGKIVGPKPAAANLGTIVEVRDLFFVTPARLKFMKTDRAETNAISDMIKRIAIAFPHIRFSLSGLDRTSMELSATENNTQGQLQRITQIMGKEFAPNSIALDAERESVRLTGFACLPSFNRNNSLHQFAYVNGRPVRDKFLWGAIRGAYADVMTRDRYPVAILFIDLPPAEVDVNVHPAKADVRFRDPGLIRGLIVGAIREALQQSGIRPTSTRSEAMLAAFQTQKPLTQQSLGNFKNAHQSSSYSPQSHHFATASMVHKPLDSTNSFGLKENATPIMEGLNTPSGDAYIPSTIPSSEELSYPLGAARAQIHKNYIIAQTQDSLIIVDQHAAHERLVYEALKNALYAKPLPSQLLLIPEIVELSEEDATCLLTHKDALQKFGLGIEPFGPGAILVRETPSMLGKINVQALIKDLADEAAEYDTTNNLKAMLDYVAATMACHGSIRSGRLLRPEEMNRLLRQMEAIPNTSTCNHGRPTYIELKLADIERLFGRK.

The protein belongs to the DNA mismatch repair MutL/HexB family.

Functionally, this protein is involved in the repair of mismatches in DNA. It is required for dam-dependent methyl-directed DNA mismatch repair. May act as a 'molecular matchmaker', a protein that promotes the formation of a stable complex between two or more DNA-binding proteins in an ATP-dependent manner without itself being part of a final effector complex. The chain is DNA mismatch repair protein MutL from Bartonella tribocorum (strain CIP 105476 / IBS 506).